A 784-amino-acid polypeptide reads, in one-letter code: PWWP domain-containing protein 2A (784 aa).

Residues 1-10 (MAAVAAAPGP) are compositionally biased toward low complexity. 4 disordered regions span residues 1 to 29 (MAAV…EWRL), 399 to 443 (DHKV…KTQL), 468 to 570 (EKAQ…EIQD), and 609 to 655 (SSAS…SKEE). Positions 399-412 (DHKVNGKGQHESQK) are enriched in basic and acidic residues. Residues 433-442 (PSQTSAAKTQ) show a composition bias toward polar residues. One can recognise a PWWP domain in the interval 684-744 (VGDIVWAKIY…LSQLAPFLEN (61 aa)).

It is found in the nucleus. H2A.Z-specific chromatin binding protein which plays an important role in the neural crest cell differentiation and/or migration during early development and is essential for the development of the head and eye. Acts as an adapter between distinct nucleosome components (H3K36me3 or H2A.Z) and chromatin-modifying complexes, contributing to the regulation of the levels of histone acetylation at actively transcribed genes. This is PWWP domain-containing protein 2A (pwwp2a) from Xenopus laevis (African clawed frog).